The primary structure comprises 106 residues: Small ribosomal subunit protein uS10 (106 aa).

Belongs to the universal ribosomal protein uS10 family. In terms of assembly, part of the 30S ribosomal subunit.

Its function is as follows. Involved in the binding of tRNA to the ribosomes. The protein is Small ribosomal subunit protein uS10 of Synechococcus sp. (strain CC9311).